The sequence spans 448 residues: Probable D-serine dehydratase (448 aa).

Lys-119 is subject to N6-(pyridoxal phosphate)lysine.

The protein belongs to the serine/threonine dehydratase family. DsdA subfamily. It depends on pyridoxal 5'-phosphate as a cofactor.

The enzyme catalyses D-serine = pyruvate + NH4(+). In Pseudomonas aeruginosa (strain ATCC 15692 / DSM 22644 / CIP 104116 / JCM 14847 / LMG 12228 / 1C / PRS 101 / PAO1), this protein is Probable D-serine dehydratase.